We begin with the raw amino-acid sequence, 88 residues long: Small ribosomal subunit protein bS20 (88 aa).

This sequence belongs to the bacterial ribosomal protein bS20 family.

Functionally, binds directly to 16S ribosomal RNA. The polypeptide is Small ribosomal subunit protein bS20 (Syntrophomonas wolfei subsp. wolfei (strain DSM 2245B / Goettingen)).